Reading from the N-terminus, the 162-residue chain is MKGKVWKFPDDVDTDIIIPGRYLVMRDPEKLREHVMEGLDPEFPSKVKPGDFIVAGKNFGCGSSREHAPLALKGAGIAAVIAESFARIFYRNAINVGIPLLEAPGITEKLNEGDEIEVDLDRGVIIRGDDEFPFKKLPDFMVEILEKGGLIPYLKKKGDFKG.

Belongs to the LeuD family. LeuD type 2 subfamily. Heterodimer of LeuC and LeuD.

It catalyses the reaction (2R,3S)-3-isopropylmalate = (2S)-2-isopropylmalate. It participates in amino-acid biosynthesis; L-leucine biosynthesis; L-leucine from 3-methyl-2-oxobutanoate: step 2/4. Functionally, catalyzes the isomerization between 2-isopropylmalate and 3-isopropylmalate, via the formation of 2-isopropylmaleate. The sequence is that of 3-isopropylmalate dehydratase small subunit (leuD) from Methanothermobacter thermautotrophicus (strain ATCC 29096 / DSM 1053 / JCM 10044 / NBRC 100330 / Delta H) (Methanobacterium thermoautotrophicum).